The following is a 108-amino-acid chain: Nucleoid-associated protein CPS_3743 (108 aa).

A disordered region spans residues 87–108 (NKDKMGALTGGMQLPPGMKMPF).

Belongs to the YbaB/EbfC family. Homodimer.

The protein resides in the cytoplasm. It is found in the nucleoid. In terms of biological role, binds to DNA and alters its conformation. May be involved in regulation of gene expression, nucleoid organization and DNA protection. This Colwellia psychrerythraea (strain 34H / ATCC BAA-681) (Vibrio psychroerythus) protein is Nucleoid-associated protein CPS_3743.